The chain runs to 229 residues: Probable ribonuclease H (229 aa).

In terms of domain architecture, RNase H type-1 spans 42-164; the sequence is LQDISLEFDK…ADFLANSAAK (123 aa). Glutamate 60, aspartate 87, and aspartate 156 together coordinate a divalent metal cation.

This sequence belongs to the RNase H family. A divalent metal cation is required as a cofactor.

It catalyses the reaction Endonucleolytic cleavage to 5'-phosphomonoester.. Its function is as follows. Endonuclease that specifically degrades the RNA of RNA-DNA hybrids. The chain is Probable ribonuclease H (RNH1) from Acanthamoeba polyphaga mimivirus (APMV).